Consider the following 159-residue polypeptide: Eukaryotic translation initiation factor 5A-2 (159 aa).

Positions 1–12 (MSDEEHQFESKA) are enriched in basic and acidic residues. A disordered region spans residues 1–23 (MSDEEHQFESKADAGASKTYPQQ). The residue at position 52 (Lys52) is a Hypusine.

It belongs to the eIF-5A family. Post-translationally, lys-52 undergoes hypusination, a unique post-translational modification that consists in the addition of a butylamino group from spermidine to lysine side chain, leading to the formation of the unusual amino acid hypusine. eIF-5As are the only known proteins to undergo this modification, which is essential for their function.

Translation factor that promotes translation elongation and termination, particularly upon ribosome stalling at specific amino acid sequence contexts. Binds between the exit (E) and peptidyl (P) site of the ribosome and promotes rescue of stalled ribosome: specifically required for efficient translation of polyproline-containing peptides as well as other motifs that stall the ribosome. Acts as a ribosome quality control (RQC) cofactor by joining the RQC complex to facilitate peptidyl transfer during CAT tailing step. This chain is Eukaryotic translation initiation factor 5A-2 (EIF-5A2), found in Nicotiana plumbaginifolia (Leadwort-leaved tobacco).